A 428-amino-acid chain; its full sequence is MLDPKFLRNELEITAERLATRGFILDVDNLTKLEEKRKSLQVATEDLQASRNAISKSIGQAKARGEDTSSIMAQVGDLGAQLDSKKAELAELLQQINSIAMSVPNLPDESAPVGADENDNVEVRRWGTPKVFDFEVKDHIDLGEALEGLDFKNAVKISGSRFIIMRGQIARLNRALGQFMLDLHTTEHGYTETYVPLLVNEESLLGTGQLPKFGEDLFHTKPATEEGQGLSLIPTAEVPLTNYVRDMIVDETELPMKMTALTPCFRSEAGSYGRDTRGVIRLHQFDKVELVQIAHPDHSMQALEDITSHAEKVLQLLNLPYRTMVLCTGDMGFGSSKTFDIEVWLPAQNTYREISSCSNMKDFQARRMQARYRSKADNKPALLHTLNGSGLAVGRTLVAVIENYQNQDGTITVPEALRPYMGGLSLIG.

Position 235–237 (235–237 (TAE)) interacts with L-serine. ATP is bound at residue 266-268 (RSE). Position 289 (E289) interacts with L-serine. 353–356 (EISS) is an ATP binding site. Residue S389 coordinates L-serine.

Belongs to the class-II aminoacyl-tRNA synthetase family. Type-1 seryl-tRNA synthetase subfamily. In terms of assembly, homodimer. The tRNA molecule binds across the dimer.

The protein resides in the cytoplasm. The enzyme catalyses tRNA(Ser) + L-serine + ATP = L-seryl-tRNA(Ser) + AMP + diphosphate + H(+). It catalyses the reaction tRNA(Sec) + L-serine + ATP = L-seryl-tRNA(Sec) + AMP + diphosphate + H(+). It functions in the pathway aminoacyl-tRNA biosynthesis; selenocysteinyl-tRNA(Sec) biosynthesis; L-seryl-tRNA(Sec) from L-serine and tRNA(Sec): step 1/1. In terms of biological role, catalyzes the attachment of serine to tRNA(Ser). Is also able to aminoacylate tRNA(Sec) with serine, to form the misacylated tRNA L-seryl-tRNA(Sec), which will be further converted into selenocysteinyl-tRNA(Sec). This is Serine--tRNA ligase from Shewanella frigidimarina (strain NCIMB 400).